Consider the following 264-residue polypeptide: S-adenosylmethionine decarboxylase proenzyme (264 aa).

The active-site Schiff-base intermediate with substrate; via pyruvic acid is the Ser113. A Pyruvic acid (Ser); by autocatalysis modification is found at Ser113. The active-site Proton acceptor; for processing activity is the His118. The Proton donor; for catalytic activity role is filled by Cys141.

Belongs to the prokaryotic AdoMetDC family. Type 2 subfamily. In terms of assembly, heterooctamer of four alpha and four beta chains arranged as a tetramer of alpha/beta heterodimers. It depends on pyruvate as a cofactor. Post-translationally, is synthesized initially as an inactive proenzyme. Formation of the active enzyme involves a self-maturation process in which the active site pyruvoyl group is generated from an internal serine residue via an autocatalytic post-translational modification. Two non-identical subunits are generated from the proenzyme in this reaction, and the pyruvate is formed at the N-terminus of the alpha chain, which is derived from the carboxyl end of the proenzyme. The post-translation cleavage follows an unusual pathway, termed non-hydrolytic serinolysis, in which the side chain hydroxyl group of the serine supplies its oxygen atom to form the C-terminus of the beta chain, while the remainder of the serine residue undergoes an oxidative deamination to produce ammonia and the pyruvoyl group blocking the N-terminus of the alpha chain.

It carries out the reaction S-adenosyl-L-methionine + H(+) = S-adenosyl 3-(methylsulfanyl)propylamine + CO2. The protein operates within amine and polyamine biosynthesis; S-adenosylmethioninamine biosynthesis; S-adenosylmethioninamine from S-adenosyl-L-methionine: step 1/1. Catalyzes the decarboxylation of S-adenosylmethionine to S-adenosylmethioninamine (dcAdoMet), the propylamine donor required for the synthesis of the polyamines spermine and spermidine from the diamine putrescine. This is S-adenosylmethionine decarboxylase proenzyme from Pseudomonas aeruginosa (strain ATCC 15692 / DSM 22644 / CIP 104116 / JCM 14847 / LMG 12228 / 1C / PRS 101 / PAO1).